The primary structure comprises 122 residues: MSRSLSSNGRVRRRKRILKLAKGFRGRCGTNYKAAKDAVSKALAHSYVARRDRKGSMRRLWISRINASVRTQGLSYSRFMNGLLQAGIALNRKVLSNMAIEDPGAFQTVIDASKKALGGGAC.

Belongs to the bacterial ribosomal protein bL20 family.

Functionally, binds directly to 23S ribosomal RNA and is necessary for the in vitro assembly process of the 50S ribosomal subunit. It is not involved in the protein synthesizing functions of that subunit. The polypeptide is Large ribosomal subunit protein bL20 (rplT) (Treponema pallidum (strain Nichols)).